The chain runs to 179 residues: MSADSKNQKKVLFVCLGNICRSTMAEIVLRGLVHSRGILDDFQIDSAGTSSYHIGDTPDPRTVQSCNQNMGRAISEESLKHFKSIPLHRARQFTDEDFSKFDYIFAMDESNLSNIKKVLKHSTTKDNHIATIKRLGEYHTHKKINVEDPYYGDMSNFNICFNHVHDCLVNFLKEIESLN.

C15 acts as the Nucleophile in catalysis. The active site involves R21. D148 acts as the Proton donor in catalysis.

The protein belongs to the low molecular weight phosphotyrosine protein phosphatase family.

It is found in the cytoplasm. The catalysed reaction is O-phospho-L-tyrosyl-[protein] + H2O = L-tyrosyl-[protein] + phosphate. It catalyses the reaction a phosphate monoester + H2O = an alcohol + phosphate. In terms of biological role, acts on tyrosine phosphorylated proteins, low-MW aryl phosphates and natural and synthetic acyl phosphates. This Dictyostelium discoideum (Social amoeba) protein is Low molecular weight phosphotyrosine protein phosphatase (acp1).